A 206-amino-acid polypeptide reads, in one-letter code: Large ribosomal subunit protein uL4 (206 aa).

Positions 46-77 (GTRAQKDREQVKHSTKKPFKQKGTGRARAGMT) are disordered. Residues 58 to 70 (HSTKKPFKQKGTG) show a composition bias toward basic residues.

This sequence belongs to the universal ribosomal protein uL4 family. In terms of assembly, part of the 50S ribosomal subunit.

Its function is as follows. One of the primary rRNA binding proteins, this protein initially binds near the 5'-end of the 23S rRNA. It is important during the early stages of 50S assembly. It makes multiple contacts with different domains of the 23S rRNA in the assembled 50S subunit and ribosome. Functionally, forms part of the polypeptide exit tunnel. This is Large ribosomal subunit protein uL4 from Albidiferax ferrireducens (strain ATCC BAA-621 / DSM 15236 / T118) (Rhodoferax ferrireducens).